Reading from the N-terminus, the 471-residue chain is Heat shock 70 kDa protein 13 (471 aa).

The first 22 residues, 1-22, serve as a signal peptide directing secretion; sequence MAGEMTILGSAVLTLLLAGYLA. Residues 315–337 form a disordered region; that stretch reads ENDRKGPPTSDSELPKDKFSQAN.

Belongs to the heat shock protein 70 family. In terms of assembly, binds UBQLN2.

Its subcellular location is the microsome. The protein localises to the endoplasmic reticulum. Functionally, has peptide-independent ATPase activity. The chain is Heat shock 70 kDa protein 13 (HSPA13) from Bos taurus (Bovine).